The following is a 114-amino-acid chain: Small ribosomal subunit protein bS6 (114 aa).

This sequence belongs to the bacterial ribosomal protein bS6 family.

Functionally, binds together with bS18 to 16S ribosomal RNA. The chain is Small ribosomal subunit protein bS6 from Protochlamydia amoebophila (strain UWE25).